Consider the following 3674-residue polypeptide: Dystrophin (3674 aa).

The interval 1-236 (MSEVSSDERE…YVTSLFQVLP (236 aa)) is actin-binding. Calponin-homology (CH) domains are found at residues 11 to 115 (DVQK…LHWQ) and 130 to 236 (TNSE…QVLP). Positions 59–68 (PKEKGSTRVH) are ANK2- and ANK-3 binding. Over residues 306–318 (SDPTRSPFPSQRL) the composition is skewed to polar residues. Positions 306 to 325 (SDPTRSPFPSQRLESPEDKS) are disordered. Spectrin repeat units lie at residues 335–443 (VNLD…NLHK), 444–552 (VLMD…LLQD), 555–663 (LKWQ…QISQ), 715–824 (EIRK…WLEY), 826–930 (NRII…ELQI), 939–1041 (RYQE…KLEE), 1044–1150 (AKLR…ALKG), 1153–1259 (DKTI…TLEE), 1262–1363 (ACWH…LLEQ), 1364–1459 (SIQS…LFQK), 1464–1564 (EQRL…QLEK), 1567–1672 (KLSR…LLLE), 1675–1774 (KHME…KASI), 1775–1870 (PLKE…KALE), 1873–1975 (HQWY…TVHE), 1988–2097 (EISY…KFDR), 2100–2204 (EKWR…RLEE), 2207–2314 (NILS…EIEA), 2315–2412 (HIKD…LRAK), 2464–2566 (FNRA…QLNE), 2569–2675 (KDST…VLEE), 2678–2791 (RLLQ…HLEA), 2797–2919 (KRLH…RKID), and 2924–3029 (RLQE…QLHE). The interval 1411–1909 (SDLTSHEISL…PEPQDEKKIK (499 aa)) is interaction with SYNM. The WW domain maps to 3044–3077 (TSVQGPWERAISPNKVPYYINHETQTTCWDHPKM). The segment at 3047–3397 (QGPWERAISP…TVLEGDNMET (351 aa)) is interaction with SYNM. The segment at 3297-3353 (KHQAKCNICKECPIIGFRYRSLKHFNYDICQSCFFSGRVAKGHKMHYPMVEYCTPTT) adopts a ZZ-type; degenerate zinc-finger fold. The Zn(2+) site is built by Cys3302, Cys3305, Cys3326, and Cys3329. The segment at 3455-3507 (DDEHLLIQHYCQSLNQDSPLSQPRSPAQILISLESEERGELERILADLEEENR) is binds to SNTB1. Residues Ser3472, Ser3479, and Ser3489 each carry the phosphoserine modification. 2 disordered regions span residues 3517-3543 (KQQH…QSPR) and 3590-3674 (QAEA…EDTM). Composition is skewed to polar residues over residues 3596-3615 (NGTT…SSQP) and 3651-3662 (QLNNSFPSSRGR). Phosphoserine is present on residues Ser3601, Ser3602, Ser3606, Ser3612, Ser3613, and Ser3655.

Interacts with SYNM. Interacts with the syntrophins SNTG1 and SNTG2. Interacts with KRT19. Component of the dystrophin-associated glycoprotein complex which is composed of three subcomplexes: a cytoplasmic complex comprised of DMD (or UTRN), DTNA and a number of syntrophins, such as SNTB1, SNTB2, SNTG1 and SNTG2, the transmembrane dystroglycan complex, and the sarcoglycan-sarcospan complex. Interacts with DAG1 (betaDAG1) with DMD; the interaction is inhibited by phosphorylation on the PPXY motif of DAG1. Interacts with SYNM; SNTA1 and SNTB1. Interacts with CMYA5. Directly interacts with ANK2 and ANK3; these interactions do not interfere with betaDAG1-binding and are necessary for proper localization in muscle cells. Identified in a dystroglycan complex that contains at least PRX, DRP2, UTRN, DMD and DAG1. Interacts with DTNB. Interacts with PGM5; the interaction is direct. Interacts with NOS1; localizes NOS1 to sarcolemma in muscle cells. In terms of tissue distribution, in the retina, expressed in the outer plexiform layer (OPL) and around the blood vessels. Also observed at the vitreal border of the retina corresponding to the inner limiting membrane (ILM). Presynaptically localized in cone pedicles and postsynaptically in bipolar cells (at protein level).

It localises to the cell membrane. Its subcellular location is the sarcolemma. It is found in the cytoplasm. The protein resides in the cytoskeleton. The protein localises to the postsynaptic cell membrane. Anchors the extracellular matrix to the cytoskeleton via F-actin. Ligand for dystroglycan. Component of the dystrophin-associated glycoprotein complex which accumulates at the neuromuscular junction (NMJ) and at a variety of synapses in the peripheral and central nervous systems and has a structural function in stabilizing the sarcolemma. Also implicated in signaling events and synaptic transmission. The protein is Dystrophin of Sus scrofa (Pig).